We begin with the raw amino-acid sequence, 1086 residues long: 1,2-beta-oligoglucan phosphorylase (1086 aa).

Aspartate 741 acts as the Proton donor in catalysis.

This sequence belongs to the glycosyl hydrolase 94 family. Monomer.

The catalysed reaction is [(1-&gt;2)-beta-D-glucosyl](n) + phosphate = [(1-&gt;2)-beta-D-glucosyl](n-1) + alpha-D-glucose 1-phosphate. In terms of biological role, catalyzes the reversible phosphorolysis of beta-(1-&gt;2)-D-glucans. The minimum length of the substrate for the phosphorolytic reaction is 3 D-glucose units. The chain is 1,2-beta-oligoglucan phosphorylase from Listeria innocua serovar 6a (strain ATCC BAA-680 / CLIP 11262).